Consider the following 845-residue polypeptide: Cadherin-related family member 5 (845 aa).

The first 25 residues, 1–25, serve as a signal peptide directing secretion; that stretch reads MGSWALLWPPLLFTGLLVRPPGTMA. The Extracellular portion of the chain corresponds to 26–669; that stretch reads QAQYCSVNKD…DKRFSVVDMA (644 aa). Asparagine 44, asparagine 81, asparagine 140, asparagine 198, asparagine 297, asparagine 308, and asparagine 405 each carry an N-linked (GlcNAc...) asparagine glycan. Cadherin domains are found at residues 71–124, 125–237, 249–354, and 355–459; these read FRIQ…APEF, PFKT…PPWF, IQAQ…PPRF, and PQRL…PPST. Residues 452–661 are disordered; sequence SEQEPPSTDV…SSGGGPSEDK (210 aa). Residues 506 to 518 are compositionally biased toward low complexity; that stretch reads SGTTLRPPTSSTP. An N-linked (GlcNAc...) asparagine glycan is attached at asparagine 526. Polar residues-rich tracts occupy residues 539-549, 556-594, and 602-611; these read TAQTPKPGTSQ, GTSTSHQPATPSGGTAQTPEPGTSQPMPPSMGTSTSHQP, and AQTPEAGTSQ. A run of 3 repeats spans residues 540–570, 571–601, and 602–631. Residues 540–645 form a 4 X 31 AA approximate tandem repeats region; that stretch reads AQTPKPGTSQ…PEPGTSQPMP (106 aa). Residues 632 to 645 form a 4; truncated repeat; that stretch reads TAQTPEPGTSQPMP. The segment covering 633–652 has biased composition (low complexity); sequence AQTPEPGTSQPMPLSKSTPS. The helical transmembrane segment at 670–690 threads the bilayer; sequence ALGGVLGALLLLALLGLAVLV. Topologically, residues 691–845 are cytoplasmic; the sequence is HKHYGPRLKC…DAPGGDDSYI (155 aa). Positions 691-845 are mediates interaction with USH1C and MYO7B and is required for proper localization to microvilli tips and function in microvilli organization; it reads HKHYGPRLKC…DAPGGDDSYI (155 aa). Positions 724–789 are disordered; sequence ANWAPVPSPT…KERRPEGGYK (66 aa). Residues 729–762 show a composition bias toward pro residues; sequence VPSPTHDPKPAEAPMPAEPAPPGPASPGGAPEPP. Phosphoserine is present on serine 770. Threonine 810 carries the post-translational modification Phosphothreonine. Residues 811 to 845 are disordered; it reads LDVDGASDSGSGDEGEGAGRGGGPYDAPGGDDSYI. 3 positions are modified to phosphoserine: serine 817, serine 819, and serine 821. Low complexity predominate over residues 835–845; it reads YDAPGGDDSYI.

As to quaternary structure, part of the IMAC/intermicrovillar adhesion complex/intermicrovillar tip-link complex composed of ANKS4B, MYO7B, USH1C, CDHR2 and CDHR5. Interacts (via cytoplasmic domain) with USH1C and MYO7B; required for proper localization of CDHR5 to microvilli tips and its function in brush border differentiation. Post-translationally, N- and O-glycosylated. In terms of tissue distribution, highest expression in kidney, liver, colon and small intestine. In kidney, expressed apically along brush border of proximal convoluted tubule but not in cortical collecting ducts. Isoform 1 is expressed primarily in adult small intestine and colon. Isoform 2 is highly expressed in fetal liver. Expressed in duodenum with higher expression in enterocytes along the villus axis and lower expression in crypts (at protein level).

The protein resides in the apical cell membrane. The protein localises to the cell projection. It localises to the microvillus membrane. Its function is as follows. Intermicrovillar adhesion molecule that forms, via its extracellular domain, calcium-dependent heterophilic complexes with CDHR2 on adjacent microvilli. Thereby, controls the packing of microvilli at the apical membrane of epithelial cells. Through its cytoplasmic domain, interacts with microvillus cytoplasmic proteins to form the intermicrovillar adhesion complex/IMAC. This complex plays a central role in microvilli and epithelial brush border differentiation. The protein is Cadherin-related family member 5 of Homo sapiens (Human).